The primary structure comprises 407 residues: RING finger protein 44 (407 aa).

Residues leucine 26–leucine 58 form a disordered region. The RING-type; atypical zinc finger occupies cysteine 355–arginine 396.

This Mus musculus (Mouse) protein is RING finger protein 44 (Rnf44).